The sequence spans 84 residues: Trefoil factor 1 (84 aa).

A signal peptide spans 1 to 24; sequence MATMENKVICALVLVSMLALGTLA. Positions 29 to 72 constitute a P-type domain; sequence ETCTVAPRERQNCGFPGVTPSQCANKGCCFDDTVRGVPWCFYPN. 3 cysteine pairs are disulfide-bonded: Cys-31/Cys-57, Cys-41/Cys-56, and Cys-51/Cys-68.

Heterodimer with GKN2; disulfide linked. In terms of tissue distribution, found in stomach, with highest levels in the upper gastric mucosal cells (at protein level). Detected in goblet cells of the small and large intestine and rectum, small submucosal glands in the esophagus, mucous acini of the sublingual gland, submucosal glands of the trachea, and epithelial cells lining the exocrine pancreatic ducts but not in the remainder of the pancreas (at protein level). Scattered expression is detected in the epithelial cells of the gallbladder and submucosal glands of the vagina, and weak expression is observed in the bronchial goblet cells of the pseudostratified epithelia in the respiratory system (at protein level). Detected in urine (at protein level). Strongly expressed in breast cancer but at low levels in normal mammary tissue. It is regulated by estrogen in MCF-7 cells. Strong expression found in normal gastric mucosa and in the regenerative tissues surrounding ulcerous lesions of gastrointestinal tract, but lower expression found in gastric cancer (at protein level).

It localises to the secreted. In terms of biological role, stabilizer of the mucous gel overlying the gastrointestinal mucosa that provides a physical barrier against various noxious agents. May inhibit the growth of calcium oxalate crystals in urine. This chain is Trefoil factor 1 (TFF1), found in Homo sapiens (Human).